Reading from the N-terminus, the 255-residue chain is Folate receptor beta (255 aa).

Residues 1-16 form the signal peptide; sequence MVWKWMPLLLLLVCVA. Intrachain disulfides connect cysteine 31–cysteine 59, cysteine 51–cysteine 99, cysteine 60–cysteine 103, cysteine 83–cysteine 169, cysteine 90–cysteine 140, cysteine 129–cysteine 203, cysteine 133–cysteine 183, and cysteine 146–cysteine 163. Folate contacts are provided by aspartate 97 and tyrosine 101. Asparagine 115 carries an N-linked (GlcNAc...) asparagine glycan. Folate contacts are provided by residues 118-122, 151-156, and serine 190; these read WRKER and HRGWDW. N-linked (GlcNAc...) asparagine glycosylation occurs at asparagine 195. Asparagine 230 is lipidated: GPI-anchor amidated asparagine. Positions 231–255 are cleaved as a propeptide — removed in mature form; it reads AGEMLHGTGGLLLSLALMLQLWLLG.

The protein belongs to the folate receptor family. Post-translationally, N-glycosylated. In terms of tissue distribution, expressed in placenta and hematopoietic cells. Expression is increased in malignant tissues.

It is found in the cell membrane. The protein localises to the secreted. Functionally, binds to folate and reduced folic acid derivatives and mediates delivery of 5-methyltetrahydrofolate and folate analogs into the interior of cells. Has high affinity for folate and folic acid analogs at neutral pH. Exposure to slightly acidic pH after receptor endocytosis triggers a conformation change that strongly reduces its affinity for folates and mediates their release. This Homo sapiens (Human) protein is Folate receptor beta (FOLR2).